The following is a 145-amino-acid chain: Large ribosomal subunit protein uL13 (145 aa).

This sequence belongs to the universal ribosomal protein uL13 family. As to quaternary structure, part of the 50S ribosomal subunit.

Functionally, this protein is one of the early assembly proteins of the 50S ribosomal subunit, although it is not seen to bind rRNA by itself. It is important during the early stages of 50S assembly. The protein is Large ribosomal subunit protein uL13 of Brevibacillus brevis (strain 47 / JCM 6285 / NBRC 100599).